Consider the following 284-residue polypeptide: Formyltetrahydrofolate deformylase (284 aa).

The ACT domain occupies 7 to 90 (TLLVSCPDQP…QIHFSDQLPR (84 aa)). Asp-228 is a catalytic residue.

This sequence belongs to the PurU family.

It carries out the reaction (6R)-10-formyltetrahydrofolate + H2O = (6S)-5,6,7,8-tetrahydrofolate + formate + H(+). It functions in the pathway purine metabolism; IMP biosynthesis via de novo pathway; formate from 10-formyl-5,6,7,8-tetrahydrofolate: step 1/1. In terms of biological role, catalyzes the hydrolysis of 10-formyltetrahydrofolate (formyl-FH4) to formate and tetrahydrofolate (FH4). The protein is Formyltetrahydrofolate deformylase of Synechocystis sp. (strain ATCC 27184 / PCC 6803 / Kazusa).